Reading from the N-terminus, the 424-residue chain is Cysteate synthase (424 aa).

K106 is subject to N6-(pyridoxal phosphate)lysine. Pyridoxal 5'-phosphate is bound by residues N132 and T381.

The protein belongs to the threonine synthase family. Cysteate synthase subfamily. In terms of assembly, homotrimer. Requires pyridoxal 5'-phosphate as cofactor.

The catalysed reaction is O-phospho-L-serine + sulfite + H(+) = L-cysteate + phosphate. The protein operates within cofactor biosynthesis; coenzyme M biosynthesis. In terms of biological role, specifically catalyzes the beta-elimination of phosphate from L-phosphoserine and the beta-addition of sulfite to the dehydroalanine intermediate to produce L-cysteate. This chain is Cysteate synthase, found in Methanoregula boonei (strain DSM 21154 / JCM 14090 / 6A8).